Reading from the N-terminus, the 377-residue chain is DNA replication and repair protein RecF (377 aa).

Position 30–37 (30–37 (GNNGSGKS)) interacts with ATP.

This sequence belongs to the RecF family.

Its subcellular location is the cytoplasm. Its function is as follows. The RecF protein is involved in DNA metabolism; it is required for DNA replication and normal SOS inducibility. RecF binds preferentially to single-stranded, linear DNA. It also seems to bind ATP. This chain is DNA replication and repair protein RecF, found in Colwellia psychrerythraea (strain 34H / ATCC BAA-681) (Vibrio psychroerythus).